We begin with the raw amino-acid sequence, 2237 residues long: MYRSGSRSSVSSHRSKDGSASGPPPGRPVGASSGPTRRPSSPPPPSCSSLRLPARRHRSPSGHRGRWASPSPPRGRRGSPSPPRGRRASPSPTRGRRASPSPPRGRRGSPSPPRARRGSPSPPRSRRHYPPGLGGFRGSIRGESRADFARDGRGDHPGGGGGSRRRSPGLCSDSSLEESLRITVGNDHFCVSTPERRRLSDRLGSPVDGLQDMDRDDLTDDSVFTRSSQCSRGLERYISREEGPLSPFLGQLDEDYRTRETFLHRPEFSPQSSCHDELLRGTERNRDKLKSSSYSIRSEERSREAKRPRYDDTEKVHSSGGDHSSFTSGTRNYRQRRSSPSPRFLDPEFRELDLARRKREEEEEQSRSLSQELVGVGDDQIGCSIPGLAGVLTTSEPGYSLQRPEEVPMMPKKSILKKRIEADMKPSLQLESFSSGASSGEDHPLYSEHSPLPLSGAIAAFTSEIENKGTTVEADLKEPQSNLYQWGPLREIPKDNSEKFDSFLGFKEKLDLKAEGLEQQTDFLLPHERASQDGSGFSRILSMLADPTITQEKRRRSFPDIEDEEKFLYGDEEEDIKSESPLKSLEDPESAGTRQKANSLPSTPAVKLESLEESNPEYAKIHNLLKTIGLDIGVAEIGKLAARTQERLHGKKPSSRPSADRRLSADRHLSGDRHFSADRCSSVEHSFTADWRSSDPHRPESRETHHSNTQSPEVSHPHPASPVDPYLRTKNSPPFLKSDHPVCHVSGPEVVGSGFQSSVAVRCMLPSAPSTPIRLPHSAALSQFHIPGASQFAAARIPPNYQGSVIPSASFDAYRHYMAYAASRWPMYPASQPPSHPLSDPHRLLPVTKQAARSRPNLRVIPTVTPAKPKQEIPVLGSISVKRIPVRVSIPSLIKYNPKKISDEKNRASQKQKVIEEREKLKTEQEARQKKMFYLTTELERLHKQQGEMLRKKRREKDGHKDPLLMEVSRLQDSIMKDIAELHKETEEAEKKQSELDKVAQILGIDIFDKSLKSSNDSKESTEKPEKEKSKSPEKELSPSNSSSSNKESKMNEKSCIKSPSSTESLQPTVKQSDQPVAAYEYYDAGSHWCKDCNTTCGTMFDFFTHMHNKKHTQTLDPYNRPWASKTQSEAKQDTVKRTDKITVPAKGSEFLIPVTGFYCQLCEEFLGDPISGEQHVKGHQHNENYKKYVEENPLYEERRNLDRQAGLAVVLETERRRQNELKRKLNEKPKEEKIEKKARIVREVKEDDKAPGELEEQLSEDGSAPEKGEVKGNASLRPQVKEEVKKEPSVASIAASFGKFSWKKPEKEEEKGSVVTPGAPKEDTVETSKDRDDGKAEVGKAKPIKIKLSGKTVIAHTSPWTPVVTTSTQTKIRPNLPIPSTVLRKSGSATVSKPAPLNTFLSIKSSGTSTKPLPVVKESSSDLLLPPDIISKAFGGEEVVLKGSPEEKVELAEKNEPSQVPEQMLALLPPPPPPPPPPPPPPPPPPPQAVPQLSAPSPAQANVVLTPVKSNSVISQTFSLGFQGPNILNPGLPVAFMASEQPTVIPSDETAPGVSESDWDQTLISMLVRPPPPLSSVFSEQAKKLEKRNSCLATANAKDLYDIFYSSGGKGAHETKLSSSTLANGESSSLPRTESSDFSSTCTLNSSMSSEDLPQCSALVTATEISNLENPISKGMESTGKWSVVDQIDPKSRDSTYSFLQPLTRLYQNKPYEIVSPKTDTLVMWTSGSSQNDTHKDRPPEGKIRFDLGEPGPPGTDSTSHLSDTHCQTNGPQKLIEINLIDNQNKNQEVYQSEGCRESEMKRKTELKGKVATEEEEEEEEEGANSIEDSNSNHGNRNTWEGEIGQPKLSTVDKKGEQSSKLMTGHENTSKVVIELSPSLPSKRTKIDLFPSLLQNPKSMPELLLLSPAGSGLCLKRQEIWERPEKPGLEDVELQGTRPELTVTIESKVLENFDTTHLEVEGFASLRNLGDMHANFHNSQTEQTRRSPTALSEKMSEEISVSSVMCNPSSSSDIEPVPSFSGFPLESPKTLVLNFETEGAHSSSNSRNGRITSNSLETGHPVENVGHDLGGERTHQALDLLAGGMLSEDVKETSPLQKDLLRMESTTVSPSGLGPSPCLPDLVDFVTRTPGVPKQKPCSPLSEPDAFLKCSSLEMGSPPPEILSVSVSEVAVPQVSEDNDSALNLVKTPPSGSPSRDQVVGGNVSPREMPEQEAAVDVIPDHTRSNVYNSQDYLNG.

Low complexity-rich tracts occupy residues 1 to 12 (MYRSGSRSSVSS) and 30 to 39 (GASSGPTRRP). Residues 1–221 (MYRSGSRSSV…DMDRDDLTDD (221 aa)) form a disordered region. The segment at 1–1114 (MYRSGSRSSV…THMHNKKHTQ (1114 aa)) is interaction with AR. S40 is subject to Phosphoserine. Residues 53–66 (PARRHRSPSGHRGR) are compositionally biased toward basic residues. 3 positions are modified to phosphoserine: S69, S109, and S111. The span at 140-156 (IRGESRADFARDGRGDH) shows a compositional bias: basic and acidic residues. A phosphoserine mark is found at S167 and S205. Phosphotyrosine is present on Y237. A phosphoserine mark is found at S239 and S246. The tract at residues 263–350 (LHRPEFSPQS…SPRFLDPEFR (88 aa)) is disordered. Basic and acidic residues-rich tracts occupy residues 274–290 (CHDE…DKLK) and 297–317 (RSEE…EKVH). Positions 321-332 (GDHSSFTSGTRN) are enriched in polar residues. Residues 348–376 (EFRELDLARRKREEEEEQSRSLSQELVGV) adopt a coiled-coil conformation. Phosphoserine occurs at positions 497, 502, 531, and 557. 2 disordered regions span residues 551–612 (QEKR…ESLE) and 645–732 (QERL…TKNS). Residues 560–576 (DIEDEEKFLYGDEEEDI) show a composition bias toward acidic residues. Glycyl lysine isopeptide (Lys-Gly) (interchain with G-Cter in SUMO2) cross-links involve residues K577, K583, K596, and K607. Basic and acidic residues predominate over residues 577 to 586 (KSESPLKSLE). Residues 592–602 (GTRQKANSLPS) are compositionally biased toward polar residues. Basic and acidic residues-rich tracts occupy residues 658 to 677 (SADR…HFSA) and 692 to 706 (RSSD…ETHH). T865 carries the phosphothreonine modification. Residues 904–1003 (EKNRASQKQK…SELDKVAQIL (100 aa)) adopt a coiled-coil conformation. 3 stretches are compositionally biased toward basic and acidic residues: residues 945 to 964 (QQGE…KDPL), 1013 to 1037 (KSSN…EKEL), and 1047 to 1056 (KESKMNEKSC). Disordered regions lie at residues 945–966 (QQGE…PLLM) and 1013–1072 (KSSN…TVKQ). The residue at position 1032 (S1032) is a Phosphoserine. The segment covering 1058-1072 (KSPSSTESLQPTVKQ) has biased composition (polar residues). Phosphoserine is present on S1059. Matrin-type zinc fingers lie at residues 1085-1119 (AGSH…LDPY) and 1158-1180 (FYCQ…VKGH). 3 disordered regions span residues 1245 to 1289 (VKED…KKEP), 1302 to 1342 (SWKK…VGKA), and 1366 to 1395 (TTST…VSKP). Basic and acidic residues-rich tracts occupy residues 1280-1289 (QVKEEVKKEP), 1304-1313 (KKPEKEEEKG), and 1321-1341 (PKED…EVGK). S1445 carries the post-translational modification Phosphoserine. Disordered regions lie at residues 1449 to 1497 (KVEL…LSAP), 1614 to 1651 (HETK…SMSS), 1727 to 1770 (TSGS…HCQT), and 1790 to 1867 (EVYQ…MTGH). Pro residues predominate over residues 1469 to 1490 (LPPPPPPPPPPPPPPPPPPPQA). Polar residues predominate over residues 1618-1639 (LSSSTLANGESSSLPRTESSDF). Over residues 1640–1651 (SSTCTLNSSMSS) the composition is skewed to low complexity. Basic and acidic residues predominate over residues 1734–1749 (DTHKDRPPEGKIRFDL). Residues 1757–1770 (TDSTSHLSDTHCQT) are compositionally biased toward polar residues. The span at 1796–1814 (GCRESEMKRKTELKGKVAT) shows a compositional bias: basic and acidic residues. Positions 1798–1827 (RESEMKRKTELKGKVATEEEEEEEEEGANS) form a coiled coil. The span at 1815 to 1824 (EEEEEEEEEG) shows a compositional bias: acidic residues. A compositionally biased stretch (polar residues) spans 1828–1840 (IEDSNSNHGNRNT). A phosphoserine mark is found at S1878, S1908, S1988, S2044, S2054, S2140, S2143, S2194, and S2206. The interval 2039–2064 (EGAHSSSNSRNGRITSNSLETGHPVE) is disordered. Over residues 2041 to 2058 (AHSSSNSRNGRITSNSLE) the composition is skewed to polar residues. The interval 2178 to 2237 (EDNDSALNLVKTPPSGSPSRDQVVGGNVSPREMPEQEAAVDVIPDHTRSNVYNSQDYLNG) is disordered. The segment covering 2226 to 2237 (SNVYNSQDYLNG) has biased composition (polar residues).

Homodimer. Heterodimer of isoform 1 and isoform 2. Isoform 1 and isoform 2 interact with AR. In terms of tissue distribution, isoform 1 and isoform 2 are highly expressed in testis, moderately expressed in adrenal gland and uterus and faintly expressed in brain, kidney and liver. Isoform 1 is expressed more in adrenal gland, uterus and liver than isoform 2 is. Expression during testicular development of isoform 1 and isoform 2 is restricted to spermatocytes at the pachytene stage of meiotic prophase and to round and elongated spermatids.

The protein resides in the nucleus. Its function is as follows. Acts as a transcriptional corepressor for AR-mediated transactivation function. May act as a transcriptional regulator during spermatogenesis and in particular, during meiotic division. In terms of biological role, acts as a transcriptional coactivator for AR-mediated transactivation function. May act as a transcriptional regulator during spermatogenesis and in particular, during meiotic division. The chain is Zinc finger protein 318 (Znf318) from Mus musculus (Mouse).